Here is a 491-residue protein sequence, read N- to C-terminus: Katanin p60 ATPase-containing subunit A1 (491 aa).

The tract at residues 1-29 (MSLLMISENVKLAREYALLGNYDSAMVYY) is interaction with KATNB1. The interval 1–75 (MSLLMISENV…VKDIMKTLES (75 aa)) is interaction with dynein and NDEL1. The interaction with microtubules stretch occupies residues 1-185 (MSLLMISENV…EPETNKFDST (185 aa)). Phosphoserine; by DYRK2 is present on residues S42 and S109. The interval 87 to 185 (QHDLPASEGE…EPETNKFDST (99 aa)) is disordered. A compositionally biased stretch (polar residues) spans 117–144 (SSQYSDPKSHGNRPSTTVRVHRSSAQNV). The residue at position 133 (T133) is a Phosphothreonine; by DYRK2. Over residues 145-169 (HNDRGKAVRCREKKEQNKGREEKNK) the composition is skewed to basic and acidic residues. The residue at position 170 (S170) is a Phosphoserine. Position 249 to 256 (249 to 256 (GPPGTGKT)) interacts with ATP.

Belongs to the AAA ATPase family. Katanin p60 subunit A1 subfamily. As to quaternary structure, can homooligomerize into hexameric rings, which may be promoted by interaction with microtubules. Interacts with KATNB1, which may serve as a targeting subunit. Interacts with ASPM; the katanin complex formation KATNA1:KATNB1 is required for the association of ASPM. Interacts with dynein and NDEL1. Associates with the E3 ligase complex containing DYRK2, EDD/UBR5, DDB1 and DCAF1 proteins (EDVP complex). Interacts with KLHL42 (via the kelch domains). Interacts with CUL3; the interaction is enhanced by KLHL42. Interacts with KATNB1 and KATNBL1. Interacts with CAMSAP2 and CAMSAP3; leading to regulate the length of CAMSAP-decorated microtubule stretches. Post-translationally, phosphorylation by DYRK2 triggers ubiquitination and subsequent degradation. In terms of processing, ubiquitinated by the BCR(KLHL42) E3 ubiquitin ligase complex, leading to its proteasomal degradation. Ubiquitinated by the EDVP E3 ligase complex and subsequently targeted for proteasomal degradation.

The protein localises to the cytoplasm. The protein resides in the midbody. It localises to the cytoskeleton. Its subcellular location is the microtubule organizing center. It is found in the centrosome. The protein localises to the spindle pole. The protein resides in the spindle. It carries out the reaction n ATP + n H2O + a microtubule = n ADP + n phosphate + (n+1) alpha/beta tubulin heterodimers.. With respect to regulation, ATPase activity is stimulated by microtubules, which promote homooligomerization. ATP-dependent microtubule severing is stimulated by interaction with KATNB1. Its function is as follows. Catalytic subunit of a complex which severs microtubules in an ATP-dependent manner. Microtubule severing may promote rapid reorganization of cellular microtubule arrays and the release of microtubules from the centrosome following nucleation. Microtubule release from the mitotic spindle poles may allow depolymerization of the microtubule end proximal to the spindle pole, leading to poleward microtubule flux and poleward motion of chromosome. Microtubule release within the cell body of neurons may be required for their transport into neuronal processes by microtubule-dependent motor proteins. This transport is required for axonal growth. The chain is Katanin p60 ATPase-containing subunit A1 from Homo sapiens (Human).